A 566-amino-acid polypeptide reads, in one-letter code: Putative sulfite reductase [NADPH] hemoprotein beta-component (566 aa).

[4Fe-4S] cluster-binding residues include Cys-430, Cys-436, Cys-475, and Cys-479. Cys-479 provides a ligand contact to siroheme.

It belongs to the nitrite and sulfite reductase 4Fe-4S domain family. Alpha(8)-beta(8). The alpha component is a flavoprotein, the beta component is a hemoprotein. It depends on siroheme as a cofactor. Requires [4Fe-4S] cluster as cofactor.

The enzyme catalyses hydrogen sulfide + 3 NADP(+) + 3 H2O = sulfite + 3 NADPH + 4 H(+). Its pathway is sulfur metabolism; hydrogen sulfide biosynthesis; hydrogen sulfide from sulfite (NADPH route): step 1/1. Its function is as follows. Component of the sulfite reductase complex that catalyzes the 6-electron reduction of sulfite to sulfide. This is one of several activities required for the biosynthesis of L-cysteine from sulfate. This is Putative sulfite reductase [NADPH] hemoprotein beta-component from Buchnera aphidicola subsp. Schizaphis graminum (strain Sg).